The sequence spans 347 residues: Protein-arginine kinase (347 aa).

The Phosphagen kinase C-terminal domain occupies 22–247; the sequence is LVVSTRIRLA…EQVIQAERHA (226 aa). Residues 25–29, H85, R118, 169–173, and 200–205 contribute to the ATP site; these read STRIR, RASVM, and RGRYGE. The short motif at 330–335 is the RDXXRA motif of the pArg binding pocket involved in allosteric regulation element; that stretch reads RDRERA.

Belongs to the ATP:guanido phosphotransferase family.

The enzyme catalyses L-arginyl-[protein] + ATP = N(omega)-phospho-L-arginyl-[protein] + ADP + H(+). With respect to regulation, appears to be allosterically activated by the binding of pArg-containing polypeptides to the pArg-binding pocket localized in the C-terminal domain of McsB. Its function is as follows. Catalyzes the specific phosphorylation of arginine residues in proteins. In Exiguobacterium sp. (strain ATCC BAA-1283 / AT1b), this protein is Protein-arginine kinase.